Consider the following 178-residue polypeptide: ATP synthase subunit delta (178 aa).

The protein belongs to the ATPase delta chain family. As to quaternary structure, F-type ATPases have 2 components, F(1) - the catalytic core - and F(0) - the membrane proton channel. F(1) has five subunits: alpha(3), beta(3), gamma(1), delta(1), epsilon(1). F(0) has three main subunits: a(1), b(2) and c(10-14). The alpha and beta chains form an alternating ring which encloses part of the gamma chain. F(1) is attached to F(0) by a central stalk formed by the gamma and epsilon chains, while a peripheral stalk is formed by the delta and b chains.

The protein resides in the cell inner membrane. Its function is as follows. F(1)F(0) ATP synthase produces ATP from ADP in the presence of a proton or sodium gradient. F-type ATPases consist of two structural domains, F(1) containing the extramembraneous catalytic core and F(0) containing the membrane proton channel, linked together by a central stalk and a peripheral stalk. During catalysis, ATP synthesis in the catalytic domain of F(1) is coupled via a rotary mechanism of the central stalk subunits to proton translocation. This protein is part of the stalk that links CF(0) to CF(1). It either transmits conformational changes from CF(0) to CF(1) or is implicated in proton conduction. The protein is ATP synthase subunit delta of Polynucleobacter necessarius subsp. necessarius (strain STIR1).